The chain runs to 124 residues: Small ribosomal subunit protein uS13 (124 aa).

A disordered region spans residues 98–124 (VRGQRTKTNARTRKGPKRTIAGKKKAR).

The protein belongs to the universal ribosomal protein uS13 family. Part of the 30S ribosomal subunit. Forms a loose heterodimer with protein S19. Forms two bridges to the 50S subunit in the 70S ribosome.

Located at the top of the head of the 30S subunit, it contacts several helices of the 16S rRNA. In the 70S ribosome it contacts the 23S rRNA (bridge B1a) and protein L5 of the 50S subunit (bridge B1b), connecting the 2 subunits; these bridges are implicated in subunit movement. Contacts the tRNAs in the A and P-sites. The polypeptide is Small ribosomal subunit protein uS13 (Mycobacterium leprae (strain Br4923)).